The following is a 100-amino-acid chain: MSGKTLTRMDLSEAVFREVGLSRNESSELVERVLQLMSDALVDGEQVKVSSFGTFSVRSKTARVGRNPKTGEEVPISPRRVLTFRPSHLMKDRVAAGNRS.

This sequence belongs to the bacterial histone-like protein family. Heterodimer of an alpha and a beta chain.

Its function is as follows. This protein is one of the two subunits of integration host factor, a specific DNA-binding protein that functions in genetic recombination as well as in transcriptional and translational control. The polypeptide is Integration host factor subunit alpha (Jannaschia sp. (strain CCS1)).